Here is a 2009-residue protein sequence, read N- to C-terminus: Sodium channel protein type 1 subunit alpha (2009 aa).

Over 1-128 the chain is Cytoplasmic; that stretch reads MEQTVLVPPG…KIAIKILVHS (128 aa). The span at 28–48 shows a compositional bias: basic and acidic residues; it reads RIAEEKAKNPKPDKKDDDENG. The segment at 28-60 is disordered; it reads RIAEEKAKNPKPDKKDDDENGPKPNSDLEAGKN. One copy of the I repeat lies at 110–454; that stretch reads ILTPFNPLRK…QQMLEQLKKQ (345 aa). The helical transmembrane segment at 129 to 146 threads the bilayer; sequence LFSMLIMCTILTNCVFMT. Residues 147 to 152 lie on the Extracellular side of the membrane; sequence MSNPPD. A helical membrane pass occupies residues 153 to 177; sequence WTKNVEYTFTGIYTFESLIKIIARG. Over 178–188 the chain is Cytoplasmic; sequence FCLEDFTFLRD. Residues 189–205 traverse the membrane as a helical segment; it reads PWNWLDFTVITFAYVTE. Topologically, residues 206-213 are extracellular; the sequence is FVDLGNVS. The N-linked (GlcNAc...) asparagine glycan is linked to N211. A helical membrane pass occupies residues 214–235; the sequence is ALRTFRVLRALKTISVIPGLKT. The Cytoplasmic segment spans residues 236–245; it reads IVGALIQSVK. A helical transmembrane segment spans residues 246–269; the sequence is KLSDVMILTVFCLSVFALIGLQLF. The Extracellular segment spans residues 270–369; sequence MGNLRNKCVQ…YGYTSFDTFS (100 aa). 2 disulfides stabilise this stretch: C277–C345 and C336–C351. N-linked (GlcNAc...) asparagine glycans are attached at residues N284, N295, N301, N306, and N338. The segment at residues 370 to 384 is an intramembrane region (pore-forming); that stretch reads WAFLSLFRLMTQDFW. Topologically, residues 385-397 are extracellular; the sequence is ENLYQLTLRAAGK. A helical transmembrane segment spans residues 398–423; that stretch reads TYMIFFVLVIFLGSFYLINLILAVVA. At 424 to 768 the chain is on the cytoplasmic side; sequence MAYEEQNQAT…HIVNLVVMDP (345 aa). Positions 458 to 528 are disordered; it reads AQQAAAATAS…EFHKSESEDS (71 aa). Residue S470 is modified to Phosphoserine. Over residues 479 to 492 the composition is skewed to low complexity; that stretch reads LSDSSSEASKLSSK. Basic residues predominate over residues 495-506; it reads KERRNRRKKRKQ. Positions 507–528 are enriched in basic and acidic residues; that stretch reads KEQSGGEEKDDDEFHKSESEDS. Residues S523, S525, S550, S551, S607, and S730 each carry the phosphoserine modification. A disordered region spans residues 584-628; sequence VGSENDFADDEHSTFEDNESRRDSLFVPRRHGERRNSNLSQTSRS. A compositionally biased stretch (basic and acidic residues) spans 593-607; the sequence is DEHSTFEDNESRRDS. The stretch at 750-1022 is one II repeat; the sequence is CSPYWLKVKH…QIAVDRMHKG (273 aa). A helical transmembrane segment spans residues 769-787; it reads FVDLAITICIVLNTLFMAM. Residues 788–797 are Extracellular-facing; that stretch reads EHYPMTEHFN. A helical transmembrane segment spans residues 798-820; that stretch reads HVLTVGNLVFTGIFTAEMFLKII. The Cytoplasmic portion of the chain corresponds to 821–830; that stretch reads AMDPYYYFQE. Residues 831–849 form a helical membrane-spanning segment; the sequence is GWNIFDGFIVTLSLVELGL. At 850-854 the chain is on the extracellular side; it reads ANVEG. The chain crosses the membrane as a helical span at residues 855-874; the sequence is LSVLRSFRLLRVFKLAKSWP. Over 875-891 the chain is Cytoplasmic; that stretch reads TLNMLIKIIGNSVGALG. Residues 892-912 traverse the membrane as a helical segment; that stretch reads NLTLVLAIIVFIFAVVGMQLF. Topologically, residues 913 to 938 are extracellular; the sequence is GKSYKDCVCKIATDCKLPRWHMNDFF. Residues C921 and C927 are joined by a disulfide bond. An intramembrane region (pore-forming) is located at residues 939–952; sequence HSFLIVFRVLCGEW. Residues 953–965 lie on the Extracellular side of the membrane; the sequence is IETMWDCMEVAGQ. An intrachain disulfide couples C959 to C968. Residues 966–992 form a helical membrane-spanning segment; sequence AMCLTVFMMVMVIRNLVVLNLFLALLL. Residues 993–1218 lie on the Cytoplasmic side of the membrane; it reads SSFSADNLAA…RTCFRIVEHN (226 aa). The disordered stretch occupies residues 1129–1163; that stretch reads TEDFSSESDLEESKEKLNESSSSSEGSTVDIGAPA. An III repeat occupies 1200–1514; it reads RGKQWWNLRR…KKYYNAMKKL (315 aa). Residues 1219–1237 form a helical membrane-spanning segment; sequence WFETFIVFMILLSSGALAF. Topologically, residues 1238–1250 are extracellular; the sequence is EDIYIDQRKTIKT. Residues 1251-1276 form a helical membrane-spanning segment; that stretch reads MLEYADKVFTYIFILEMLLKWVAYGY. The Cytoplasmic portion of the chain corresponds to 1277–1278; sequence QT. Residues 1279 to 1304 form a helical membrane-spanning segment; it reads YFTNAWCWLDFLIVDVSLVSLTANAL. Over 1305-1313 the chain is Extracellular; that stretch reads GYSELGAIK. Residues 1314–1332 form a helical membrane-spanning segment; sequence SLRTLRALRPLRALSRFEG. Residues 1333 to 1345 are Cytoplasmic-facing; sequence MRVVVNALLGAIP. A helical transmembrane segment spans residues 1346 to 1369; the sequence is SIMNVLLVCLIFWLIFSIMGVNLF. The Extracellular segment spans residues 1370 to 1415; sequence AGKFYHCVNTTTGDTFEITEVNNHSDCLKLIERNETARWKNVKVNF. A disulfide bond links C1376 and C1396. Residues N1378, N1392, and N1403 are each glycosylated (N-linked (GlcNAc...) asparagine). The segment at residues 1416-1433 is an intramembrane region (pore-forming); that stretch reads DNVGFGYLSLLQVATFKG. Over 1434–1457 the chain is Extracellular; that stretch reads WMDIMYAAVDSRNVELQPKYEESL. Residues 1458 to 1483 traverse the membrane as a helical segment; that stretch reads YMYLYFVIFIIFGSFFTLNLFIGVII. Over 1484–1541 the chain is Cytoplasmic; sequence DNFNQQKKKFGGQDIFMTEEQKKYYNAMKKLGSKKPQKPIPRPGNKFQGMVFDFVTRQ. Position 1516 is a phosphoserine; by PKC (S1516). An IV repeat occupies 1523 to 1821; that stretch reads IPRPGNKFQG…WEKFDPDATQ (299 aa). Residues 1542 to 1560 form a helical membrane-spanning segment; sequence VFDISIMILICLNMVTMMV. Over 1561–1571 the chain is Extracellular; sequence ETDDQSDYVTS. The S1-S2 loop of repeat IV stretch occupies residues 1561–1571; that stretch reads ETDDQSDYVTS. The helical transmembrane segment at 1572–1593 threads the bilayer; sequence ILSRINLVFIVLFTGECVLKLI. At 1594–1601 the chain is on the cytoplasmic side; that stretch reads SLRHYYFT. Residues 1602 to 1623 traverse the membrane as a helical segment; it reads IGWNIFDFVVVILSIVGMFLAE. An S3b-S4 loop of repeat IV region spans residues 1619–1636; it reads MFLAELIEKYFVSPTLFR. Over 1624–1636 the chain is Extracellular; it reads LIEKYFVSPTLFR. The helical transmembrane segment at 1637–1655 threads the bilayer; that stretch reads VIRLARIGRILRLIKGAKG. Residues 1656 to 1665 are Cytoplasmic-facing; the sequence is IRTLLFALMM. Residues 1666–1688 form a helical membrane-spanning segment; that stretch reads SLPALFNIGLLLFLVMFIYAIFG. Residues 1689–1711 lie on the Extracellular side of the membrane; sequence MSNFAYVKREVGIDDMFNFETFG. Residues 1712–1726 constitute an intramembrane region (pore-forming); the sequence is NSMICLFQITTSAGW. Over 1727–1759 the chain is Extracellular; the sequence is DGLLAPILNSKPPDCDPNKVNPGSSVKGDCGNP. Residues C1741 and C1756 are joined by a disulfide bond. The helical transmembrane segment at 1760–1788 threads the bilayer; that stretch reads SVGIFFFVSYIIISFLVVVNMYIAVILEN. Residues 1789-2009 lie on the Cytoplasmic side of the membrane; it reads FSVATEESAE…EGKDEKAKGK (221 aa). An IQ domain is found at 1915 to 1944; that stretch reads EEVSAVIIQRAYRRHLLKRTVKQASFTYNK. Residues 1986 to 2009 form a disordered region; that stretch reads YDRVTKPIVEKHEQEGKDEKAKGK. The span at 1988–2009 shows a compositional bias: basic and acidic residues; sequence RVTKPIVEKHEQEGKDEKAKGK.

It belongs to the sodium channel (TC 1.A.1.10) family. Nav1.1/SCN1A subfamily. In terms of assembly, the Nav1.1 voltage-gated sodium channel consists of an ion-conducting alpha subunit SCN1A which is functional on its own regulated by one or more beta-1 (SCN1B), beta-2 (SCN2B), beta-3 (SCN3B) and beta-4 (SCN4B) subunits. SCN1B and SCN3B are non-covalently associated with SCN1A. SCN2B and SCN4B are disulfide-linked to SCN1A. SCN1B regulates both the expression at the plasma membrane and the voltage dependence of Nav1.1 inactivation. SCN3B and SCN4B reduce Nav1.1 conductance. Probably interacts with TMEM233; modulates the gating properties of NaV1.1. Interacts with FGF13; regulates the steady-state inactivation of Nav.1.1. Post-translationally, phosphorylation at Ser-1516 by PKC in a highly conserved cytoplasmic loop slows inactivation of the sodium channel and reduces peak sodium currents.

It is found in the cell membrane. It catalyses the reaction Na(+)(in) = Na(+)(out). Activated by the spider toxins Hm1a and Hm1b (H.maculata, AC P60992 and AC P0DOC5) eliciting acute pain and mechanical allodynia. Inhibited by the conotoxin GVIIJ. In terms of biological role, pore-forming subunit of Nav1.1, a voltage-gated sodium (Nav) channel that directly mediates the depolarizing phase of action potentials in excitable membranes. Navs, also called VGSCs (voltage-gated sodium channels) or VDSCs (voltage-dependent sodium channels), operate by switching between closed and open conformations depending on the voltage difference across the membrane. In the open conformation they allow Na(+) ions to selectively pass through the pore, along their electrochemical gradient. The influx of Na(+) ions provokes membrane depolarization, initiating the propagation of electrical signals throughout cells and tissues. By regulating the excitability of neurons, ensures that they respond appropriately to synaptic inputs, maintaining the balance between excitation and inhibition in brain neural circuits. Nav1.1 plays a role in controlling the excitability and action potential propagation from somatosensory neurons, thereby contributing to the sensory perception of mechanically-induced pain. The chain is Sodium channel protein type 1 subunit alpha from Rattus norvegicus (Rat).